The primary structure comprises 119 residues: Immunoglobulin lambda variable 4-69 (119 aa).

An N-terminal signal peptide occupies residues 1 to 20; it reads MAWTPLLFLTLLLHCTGSLS. A framework-1 region spans residues 21–45; that stretch reads QLVLTQSPSASASLGASVKLTCTLS. Residues 21 to 119 enclose the Ig-like domain; that stretch reads QLVLTQSPSA…YYCQTWGTGI (99 aa). Residues Cys42 and Cys112 are joined by a disulfide bond. The complementarity-determining-1 stretch occupies residues 46-52; the sequence is SGHSSYA. The segment at 53-69 is framework-2; it reads IAWHQQQPEKGPRYLMK. The tract at residues 70-76 is complementarity-determining-2; the sequence is LNSDGSH. The disordered stretch occupies residues 73 to 92; that stretch reads DGSHSKGDGIPDRFSGSSSG. The framework-3 stretch occupies residues 77 to 112; it reads SKGDGIPDRFSGSSSGAERYLTISSLQSEDEADYYC. Residues 113–119 form a complementarity-determining-3 region; that stretch reads QTWGTGI.

As to quaternary structure, immunoglobulins are composed of two identical heavy chains and two identical light chains; disulfide-linked.

It is found in the secreted. The protein localises to the cell membrane. V region of the variable domain of immunoglobulin light chains that participates in the antigen recognition. Immunoglobulins, also known as antibodies, are membrane-bound or secreted glycoproteins produced by B lymphocytes. In the recognition phase of humoral immunity, the membrane-bound immunoglobulins serve as receptors which, upon binding of a specific antigen, trigger the clonal expansion and differentiation of B lymphocytes into immunoglobulins-secreting plasma cells. Secreted immunoglobulins mediate the effector phase of humoral immunity, which results in the elimination of bound antigens. The antigen binding site is formed by the variable domain of one heavy chain, together with that of its associated light chain. Thus, each immunoglobulin has two antigen binding sites with remarkable affinity for a particular antigen. The variable domains are assembled by a process called V-(D)-J rearrangement and can then be subjected to somatic hypermutations which, after exposure to antigen and selection, allow affinity maturation for a particular antigen. The chain is Immunoglobulin lambda variable 4-69 from Homo sapiens (Human).